The sequence spans 329 residues: Acetyl-coenzyme A carboxylase carboxyl transferase subunit alpha (329 aa).

In terms of domain architecture, CoA carboxyltransferase C-terminal spans 40–294 (QLETLAARRR…KTSILRHLTE (255 aa)).

It belongs to the AccA family. As to quaternary structure, acetyl-CoA carboxylase is a heterohexamer composed of biotin carboxyl carrier protein (AccB), biotin carboxylase (AccC) and two subunits each of ACCase subunit alpha (AccA) and ACCase subunit beta (AccD).

Its subcellular location is the cytoplasm. The catalysed reaction is N(6)-carboxybiotinyl-L-lysyl-[protein] + acetyl-CoA = N(6)-biotinyl-L-lysyl-[protein] + malonyl-CoA. It participates in lipid metabolism; malonyl-CoA biosynthesis; malonyl-CoA from acetyl-CoA: step 1/1. Its function is as follows. Component of the acetyl coenzyme A carboxylase (ACC) complex. First, biotin carboxylase catalyzes the carboxylation of biotin on its carrier protein (BCCP) and then the CO(2) group is transferred by the carboxyltransferase to acetyl-CoA to form malonyl-CoA. This chain is Acetyl-coenzyme A carboxylase carboxyl transferase subunit alpha, found in Prochlorococcus marinus (strain SARG / CCMP1375 / SS120).